Consider the following 64-residue polypeptide: Large ribosomal subunit protein uL29 (64 aa).

This sequence belongs to the universal ribosomal protein uL29 family.

The sequence is that of Large ribosomal subunit protein uL29 from Maridesulfovibrio salexigens (strain ATCC 14822 / DSM 2638 / NCIMB 8403 / VKM B-1763) (Desulfovibrio salexigens).